A 157-amino-acid chain; its full sequence is Snaclec A16 (157 aa).

Positions 1–23 (MGRLISVSFGLLVVFLSLSGTGA) are cleaved as a signal peptide. 3 disulfide bridges follow: C27–C38, C55–C149, and C124–C141. In terms of domain architecture, C-type lectin spans 34 to 150 (YEGHCYKVFN…CELAYHFICM (117 aa)).

Belongs to the snaclec family. As to quaternary structure, heterodimer; disulfide-linked. As to expression, expressed by the venom gland.

The protein localises to the secreted. Interferes with one step of hemostasis (modulation of platelet aggregation, or coagulation cascade, for example). The polypeptide is Snaclec A16 (Macrovipera lebetinus (Levantine viper)).